A 1448-amino-acid chain; its full sequence is DNA-directed RNA polymerase subunit beta' (1448 aa).

Zn(2+) contacts are provided by cysteine 66, cysteine 68, cysteine 81, and cysteine 84. Mg(2+) is bound by residues aspartate 474, aspartate 476, and aspartate 478. 4 residues coordinate Zn(2+): cysteine 814, cysteine 888, cysteine 895, and cysteine 898. Residues 1408–1448 (LEELQAAIGGDGESPSGDGAAGDGAPSEEDVEQIEASGSEN) are disordered.

It belongs to the RNA polymerase beta' chain family. The RNAP catalytic core consists of 2 alpha, 1 beta, 1 beta' and 1 omega subunit. When a sigma factor is associated with the core the holoenzyme is formed, which can initiate transcription. It depends on Mg(2+) as a cofactor. Zn(2+) serves as cofactor.

The enzyme catalyses RNA(n) + a ribonucleoside 5'-triphosphate = RNA(n+1) + diphosphate. In terms of biological role, DNA-dependent RNA polymerase catalyzes the transcription of DNA into RNA using the four ribonucleoside triphosphates as substrates. The polypeptide is DNA-directed RNA polymerase subunit beta' (Salinibacter ruber (strain DSM 13855 / M31)).